A 443-amino-acid polypeptide reads, in one-letter code: ATP-dependent protease ATPase subunit HslU (443 aa).

Residues Ile18, 60 to 65 (GVGKTE), Asp256, Glu321, and Arg393 each bind ATP.

This sequence belongs to the ClpX chaperone family. HslU subfamily. As to quaternary structure, a double ring-shaped homohexamer of HslV is capped on each side by a ring-shaped HslU homohexamer. The assembly of the HslU/HslV complex is dependent on binding of ATP.

It is found in the cytoplasm. ATPase subunit of a proteasome-like degradation complex; this subunit has chaperone activity. The binding of ATP and its subsequent hydrolysis by HslU are essential for unfolding of protein substrates subsequently hydrolyzed by HslV. HslU recognizes the N-terminal part of its protein substrates and unfolds these before they are guided to HslV for hydrolysis. This is ATP-dependent protease ATPase subunit HslU from Shigella dysenteriae serotype 1 (strain Sd197).